Consider the following 426-residue polypeptide: Adenylosuccinate synthetase (426 aa).

GTP is bound by residues 12–18 and 40–42; these read GDEGKGK and GHT. Asp13 (proton acceptor) is an active-site residue. 2 residues coordinate Mg(2+): Asp13 and Gly40. Residues 13-16, 38-41, Thr125, Arg139, Gln221, Thr236, and Arg300 each bind IMP; these read DEGK and NAGH. His41 serves as the catalytic Proton donor. 296-302 serves as a coordination point for substrate; it reads TTTGRPR. Residues Arg302, 328 to 330, and 410 to 412 each bind GTP; these read KLD and AVG.

It belongs to the adenylosuccinate synthetase family. Homodimer. Requires Mg(2+) as cofactor.

The protein localises to the cytoplasm. The catalysed reaction is IMP + L-aspartate + GTP = N(6)-(1,2-dicarboxyethyl)-AMP + GDP + phosphate + 2 H(+). Its pathway is purine metabolism; AMP biosynthesis via de novo pathway; AMP from IMP: step 1/2. Plays an important role in the de novo pathway of purine nucleotide biosynthesis. Catalyzes the first committed step in the biosynthesis of AMP from IMP. The chain is Adenylosuccinate synthetase from Syntrophomonas wolfei subsp. wolfei (strain DSM 2245B / Goettingen).